Reading from the N-terminus, the 69-residue chain is MARPNTSEVRNLSDADINEKIDGLRRELFQLRFEQATRQLANTHRFKEARIKLAQLLTVQSERQRSTAS.

This sequence belongs to the universal ribosomal protein uL29 family.

This is Large ribosomal subunit protein uL29 from Synechococcus sp. (strain CC9902).